Consider the following 284-residue polypeptide: Homeobox protein six1b (284 aa).

Residues 124 to 183 constitute a DNA-binding region (homeobox); it reads GEETSYCFKEKSRGVLREWYTHNPYPSPREKRELAEATGLTTTQVSNWFKNRRQRDRAAE. A disordered region spans residues 167–238; sequence QVSNWFKNRR…NSVLLLQGNM (72 aa). Residues 179 to 190 are compositionally biased toward basic and acidic residues; the sequence is DRAAEAKERENS. Composition is skewed to polar residues over residues 191–204 and 226–238; these read ENNN…NQLS and PDQN…QGNM.

The protein belongs to the SIX/Sine oculis homeobox family. In terms of assembly, interacts with eya1.

The protein resides in the nucleus. It is found in the cytoplasm. Transcription factor that is involved in the regulation of cell proliferation, apoptosis and embryonic development. Depending on context, functions as a transcriptional repressor or activator. Transcriptional activation is enhanced by eya1 (in vitro). Plays an important role in the development of the inner ear, where it promotes hair cell proliferation and inhibits proliferation of neural progenitor cells. Required for normal myogenesis. Plays a role in the development of fast muscle fibers throughout the body, as well as the development of craniofacial muscles. Required for normal expression of myod1 and myog during myogenesis. This chain is Homeobox protein six1b (six1b), found in Danio rerio (Zebrafish).